The sequence spans 507 residues: Glutamate--tRNA ligase (507 aa).

The 'HIGH' region signature appears at 14 to 24; it reads PSPTGYLHIGG. The 'KMSKS' region signature appears at 261–265; sequence KLSKR. An ATP-binding site is contributed by Lys-264.

The protein belongs to the class-I aminoacyl-tRNA synthetase family. Glutamate--tRNA ligase type 1 subfamily. Monomer.

It localises to the cytoplasm. The catalysed reaction is tRNA(Glu) + L-glutamate + ATP = L-glutamyl-tRNA(Glu) + AMP + diphosphate. Its function is as follows. Catalyzes the attachment of glutamate to tRNA(Glu) in a two-step reaction: glutamate is first activated by ATP to form Glu-AMP and then transferred to the acceptor end of tRNA(Glu). This is Glutamate--tRNA ligase from Roseiflexus castenholzii (strain DSM 13941 / HLO8).